The following is a 166-amino-acid chain: Endoribonuclease YbeY (166 aa).

Zn(2+) is bound by residues H132, H136, and H142.

This sequence belongs to the endoribonuclease YbeY family. Requires Zn(2+) as cofactor.

The protein resides in the cytoplasm. Single strand-specific metallo-endoribonuclease involved in late-stage 70S ribosome quality control and in maturation of the 3' terminus of the 16S rRNA. In Clostridium botulinum (strain Kyoto / Type A2), this protein is Endoribonuclease YbeY.